The chain runs to 206 residues: MILLKRTKIRGVSVSFVSLQRRTHSRLVNPIRQQHQQITKQRSSKILKNAHFYDFRSLPKVPTTQYLEARELTRDILYSGYRPVMYPVKENPLFRDKKRKSLQTLLTMNEKTNAEAKTIDEKKHKNILFGERGTGGIMSGGVNGTWKYNPTVPNELLPFNWWSTSSMGMEYFPEWKNVPPYMMRKLKPFDKALQMRLTHKSKKKMK.

The transit peptide at 1-24 (MILLKRTKIRGVSVSFVSLQRRTH) directs the protein to the mitochondrion.

It localises to the mitochondrion envelope. Its function is as follows. Required for degradation of unstable forms of cytochrome c. In Saccharomyces cerevisiae (strain ATCC 204508 / S288c) (Baker's yeast), this protein is Protein SUE1, mitochondrial.